We begin with the raw amino-acid sequence, 513 residues long: MEISWGRALWRNFLGQSPDWYKLALIIFLIVNPLIFLISPFVAGWLLVAEFIFTLAMALKCYPLLPGGLLAIEAVFIGMTSAEHVREEVAANLEVLLLLMFMVAGIYFMKQLLLFIFTRLLLSIRSKMLLSLSFCVAAAFLSAFLDALTVVAVVISVAVGFYGIYHRVASSRTEDTDLQDDSHIDKHYKVVLEQFRGFLRSLMMHAGVGTALGGVMTMVGEPQNLIIAKAAGWHFGDFFLRMSPVTVPVLICGLLTCLLVEKLRWFGYGETLPEKVREVLQQFDDQSRHQRTRQDKIRLIVQAIIGVWLVTALALHLAEVGLIGLSVIILATSLIGVTDEHAIGKAFTESLPFTALLTVFFSVVAVIIDQQLFSPIIQFVLQASEHAQLSLFYIFNGLLSSISDNVFVGTIYINEAKAAMESGAITLKQYELLAVAINTGTNLPSVATPNGQAAFLFLLTSALAPLIRLSYGRMVWMALPYTLVLTLVGLLCVEFTLAPVTEWFMQMGWIATL.

12 helical membrane passes run 23–43, 52–72, 97–117, 120–140, 144–164, 202–222, 238–258, 303–323, 348–368, 391–411, 447–467, and 475–495; these read LALI…PFVA, IFTL…LLAI, LLLM…LFIF, LLLS…AAAF, FLDA…FYGI, LMMH…VGEP, FFLR…LTCL, AIIG…VGLI, TESL…AVII, LFYI…VGTI, ATPN…APLI, and VWMA…CVEF.

The protein belongs to the NhaB Na(+)/H(+) (TC 2.A.34) antiporter family.

It localises to the cell inner membrane. The enzyme catalyses 2 Na(+)(in) + 3 H(+)(out) = 2 Na(+)(out) + 3 H(+)(in). Na(+)/H(+) antiporter that extrudes sodium in exchange for external protons. The polypeptide is Na(+)/H(+) antiporter NhaB (Shigella sonnei (strain Ss046)).